The following is a 448-amino-acid chain: ATP synthase subunit b-delta (448 aa).

The tract at residues 1-168 (MSTFIGQLIG…GSVGAAKRPV (168 aa)) is ATP synthase subunit b. Residues 4–24 (FIGQLIGFAVIVFLVVKYVVP) form a helical membrane-spanning segment. The segment at 169–448 (PGGYSGMHAA…LSAAALHLPN (280 aa)) is ATP synthase subunit delta.

It in the N-terminal section; belongs to the ATPase B chain family. In the C-terminal section; belongs to the ATPase delta chain family. In terms of assembly, F-type ATPases have 2 components, F(1) - the catalytic core - and F(0) - the membrane proton channel. F(1) has five subunits: alpha(3), beta(3), gamma(1), delta(1), epsilon(1). F(0) has three main subunits: a(1), b(2) and c(10-14). The alpha and beta chains form an alternating ring which encloses part of the gamma chain. F(1) is attached to F(0) by a central stalk formed by the gamma and epsilon chains, while a peripheral stalk is formed by the delta and b chains.

It is found in the cell membrane. Its function is as follows. F(1)F(0) ATP synthase produces ATP from ADP in the presence of a proton or sodium gradient. F-type ATPases consist of two structural domains, F(1) containing the extramembraneous catalytic core and F(0) containing the membrane proton channel, linked together by a central stalk and a peripheral stalk. During catalysis, ATP synthesis in the catalytic domain of F(1) is coupled via a rotary mechanism of the central stalk subunits to proton translocation. This fusion protein includes a component of the F(0) channel (subunit b) and of the F(1) subunit (subunit delta). Two copies of subunit b and one of delta together form the peripheral 'stator' stalk which links F(1) to F(0). This Mycobacteroides abscessus (strain ATCC 19977 / DSM 44196 / CCUG 20993 / CIP 104536 / JCM 13569 / NCTC 13031 / TMC 1543 / L948) (Mycobacterium abscessus) protein is ATP synthase subunit b-delta (atpFH).